The sequence spans 177 residues: ATP synthase subunit b (177 aa).

Residues 35–55 (FFVVLAIFLIVLAVIGTFVVP) traverse the membrane as a helical segment.

It belongs to the ATPase B chain family. F-type ATPases have 2 components, F(1) - the catalytic core - and F(0) - the membrane proton channel. F(1) has five subunits: alpha(3), beta(3), gamma(1), delta(1), epsilon(1). F(0) has three main subunits: a(1), b(2) and c(10-14). The alpha and beta chains form an alternating ring which encloses part of the gamma chain. F(1) is attached to F(0) by a central stalk formed by the gamma and epsilon chains, while a peripheral stalk is formed by the delta and b chains.

The protein resides in the cell membrane. In terms of biological role, f(1)F(0) ATP synthase produces ATP from ADP in the presence of a proton or sodium gradient. F-type ATPases consist of two structural domains, F(1) containing the extramembraneous catalytic core and F(0) containing the membrane proton channel, linked together by a central stalk and a peripheral stalk. During catalysis, ATP synthesis in the catalytic domain of F(1) is coupled via a rotary mechanism of the central stalk subunits to proton translocation. Its function is as follows. Component of the F(0) channel, it forms part of the peripheral stalk, linking F(1) to F(0). This Mycobacteroides abscessus (strain ATCC 19977 / DSM 44196 / CCUG 20993 / CIP 104536 / JCM 13569 / NCTC 13031 / TMC 1543 / L948) (Mycobacterium abscessus) protein is ATP synthase subunit b.